The chain runs to 278 residues: Nucleotide-binding protein Tlet_0523 (278 aa).

Residue 9–16 (GLSGAGKS) participates in ATP binding. 58–61 (DIRS) serves as a coordination point for GTP.

This sequence belongs to the RapZ-like family.

Functionally, displays ATPase and GTPase activities. The protein is Nucleotide-binding protein Tlet_0523 of Pseudothermotoga lettingae (strain ATCC BAA-301 / DSM 14385 / NBRC 107922 / TMO) (Thermotoga lettingae).